A 476-amino-acid polypeptide reads, in one-letter code: Serine/threonine-protein kinase sax-1 (476 aa).

A Protein kinase domain is found at Phe87–Val381. ATP is bound by residues Ile93–Val101 and Lys116. Catalysis depends on Asp210, which acts as the Proton acceptor. Residues Lys382 to Met452 enclose the AGC-kinase C-terminal domain.

Belongs to the protein kinase superfamily. AGC Ser/Thr protein kinase family. It depends on Mg(2+) as a cofactor. Widely expressed in embryonic and larval neurons that contribute axons to the nerve ring and in hypodermal cells, including lateral seam cells. Also displays a punctate localization in muscle.

Its subcellular location is the cytoplasm. It is found in the nucleus. The enzyme catalyses L-seryl-[protein] + ATP = O-phospho-L-seryl-[protein] + ADP + H(+). The catalysed reaction is L-threonyl-[protein] + ATP = O-phospho-L-threonyl-[protein] + ADP + H(+). Acts with sax-2 to restrict the growth of both primary and secondary neurites. Regulates mechanosensory tiling by controlling the termination point of sensory dendrites. This is Serine/threonine-protein kinase sax-1 from Caenorhabditis elegans.